We begin with the raw amino-acid sequence, 133 residues long: Nucleoside diphosphate kinase (133 aa).

ATP contacts are provided by Lys-9, Phe-57, Arg-85, Thr-91, Arg-102, and Asn-112. His-115 acts as the Pros-phosphohistidine intermediate in catalysis.

It belongs to the NDK family. As to quaternary structure, homotetramer. Mg(2+) serves as cofactor.

Its subcellular location is the cytoplasm. It catalyses the reaction a 2'-deoxyribonucleoside 5'-diphosphate + ATP = a 2'-deoxyribonucleoside 5'-triphosphate + ADP. The catalysed reaction is a ribonucleoside 5'-diphosphate + ATP = a ribonucleoside 5'-triphosphate + ADP. Functionally, major role in the synthesis of nucleoside triphosphates other than ATP. The ATP gamma phosphate is transferred to the NDP beta phosphate via a ping-pong mechanism, using a phosphorylated active-site intermediate. This chain is Nucleoside diphosphate kinase, found in Rubrobacter xylanophilus (strain DSM 9941 / JCM 11954 / NBRC 16129 / PRD-1).